We begin with the raw amino-acid sequence, 960 residues long: RasGEF domain-containing serine/threonine-protein kinase X (960 aa).

The region spanning 21–274 (LEFNEKIGKG…FDEILSQLKV (254 aa)) is the Protein kinase domain. ATP contacts are provided by residues 27–35 (IGKGSFGSV) and Lys48. Asp140 functions as the Proton acceptor in the catalytic mechanism. Positions 314-368 (NISFSPNNSNNNNNNNNNISNISPDITTGIQQINLSSSGGSNNSSPSTPPQGSQL) are enriched in low complexity. 2 disordered regions span residues 314–372 (NISF…VSLA) and 393–413 (GQLS…HKPS). In terms of domain architecture, N-terminal Ras-GEF spans 437–565 (PCYAALTSHI…LGTTISNNEL (129 aa)). A disordered region spans residues 596-651 (NNNNNNNNNPVNNINNINNNNSVNSSSSNNNNNNNNNNSNNNNNNNNNNNNNNNNN). The Ras-GEF domain occupies 712-957 (HSTELARQIT…KNNSLKCEPP (246 aa)).

The protein belongs to the protein kinase superfamily. TKL Ser/Thr protein kinase family.

The catalysed reaction is L-seryl-[protein] + ATP = O-phospho-L-seryl-[protein] + ADP + H(+). It carries out the reaction L-threonyl-[protein] + ATP = O-phospho-L-threonyl-[protein] + ADP + H(+). Functionally, promotes the exchange of Ras-bound GDP by GTP. This Dictyostelium discoideum (Social amoeba) protein is RasGEF domain-containing serine/threonine-protein kinase X (gefX).